We begin with the raw amino-acid sequence, 351 residues long: MPTTMQALVGAESGGYRLAENVDIPVPQRGSILVQVHAVALNPRDAKIVDFSNAPGSLGGCDFAGTVKKVGEGVTRFKEGDRVLAVTFGSNALDKTKGAFAEFALAEEDISCRIPEDFSFTQACSIGLSMATAGLAIFQAPGLELSLHGGKGEAVLVSGGATATGTMATQLLRMAGYTPIVTCSPANNALCQSYGAAACFDYHSPACGADIRVQTNDSLRYVLDCVTDTTTMKMCYEAIGSSGGSYIALETIATTVKYTRRDVRADWFLADAIMGNGVQMAGTYGRAPSPELRRFGKQLFALAENWLHDGSIRHHPLEIQDGGLANMPQALNDMKLGKVHAKKLVVPILGH.

An Enoyl reductase (ER) domain is found at G10–V346. NADP(+)-binding positions include A161–T164, S184–N187, Y202, L249–E250, and V339–H340.

Belongs to the zinc-containing alcohol dehydrogenase family.

It participates in secondary metabolite biosynthesis. Its function is as follows. Trans-enoyl reductase; part of the gene cluster that mediates the biosynthesis of gregatin A, a fungal polyketide featuring an alkylated furanone core. The PKS grgA synthesizes C11 and C4 polyketide chains in the presence and absence of the trans-enoyl reductase grgB, respectively. The polyketide transferase grgF is then responsible for the fusion of the two carbon chains to produce the furanone skeleton of gregatin A. Next, the cytochrome P450 monooxygenase grgG accepts performs the oxidative cyclization to furnish the gregatin scaffold and leads to the formation of desmethylgregatin A. Finally, the O-methyltransferase grgD methylates the carboxyl group of desmethylgregatin A to provide gregatin A. In Penicillium sp, this protein is Trans-enoyl reductase grgB.